Reading from the N-terminus, the 432-residue chain is Histidine--tRNA ligase (432 aa).

This sequence belongs to the class-II aminoacyl-tRNA synthetase family. In terms of assembly, homodimer.

The protein localises to the cytoplasm. The enzyme catalyses tRNA(His) + L-histidine + ATP = L-histidyl-tRNA(His) + AMP + diphosphate + H(+). This chain is Histidine--tRNA ligase, found in Ralstonia nicotianae (strain ATCC BAA-1114 / GMI1000) (Ralstonia solanacearum).